Here is a 438-residue protein sequence, read N- to C-terminus: Fibrinogen gamma chain (438 aa).

A signal peptide spans 1-25; that stretch reads MTRLPKQGLLLLQSLALLSSAFGNI. Residue asparagine 76 is glycosylated (N-linked (GlcNAc...) asparagine). The Fibrinogen C-terminal domain maps to 167-414; sequence QIQEFTGKDC…SVTMKIMPLN (248 aa). Cysteine 176 and cysteine 205 are oxidised to a cystine. Ca(2+) is bound by residues aspartate 341, aspartate 343, and glycine 347. Cysteine 349 and cysteine 362 are disulfide-bonded.

In terms of assembly, heterohexamer; disulfide linked. Contains 2 sets of 3 non-identical chains (alpha, beta and gamma). The 2 heterotrimers are in head to head conformation with the N-termini in a small central domain. Post-translationally, conversion of fibrinogen to fibrin is triggered by thrombin, which cleaves fibrinopeptides A and B from alpha and beta chains, and thus exposes the N-terminal polymerization sites responsible for the formation of the soft clot. The soft clot is converted into the hard clot by factor XIIIA which catalyzes the epsilon-(gamma-glutamyl)lysine cross-linking between gamma chains (stronger) and between alpha chains (weaker) of different monomers.

The protein resides in the secreted. In terms of biological role, together with fibrinogen alpha (FGA) and fibrinogen beta (FGB), polymerizes to form an insoluble fibrin matrix. Has a major function in hemostasis as one of the primary components of blood clots. In Xenopus laevis (African clawed frog), this protein is Fibrinogen gamma chain (fgg).